Here is a 267-residue protein sequence, read N- to C-terminus: L-aspartate dehydrogenase (267 aa).

NAD(+) is bound by residues Ala-124 and Asn-190. Residue His-218 is part of the active site.

This sequence belongs to the L-aspartate dehydrogenase family.

It catalyses the reaction L-aspartate + NADP(+) + H2O = oxaloacetate + NH4(+) + NADPH + H(+). The enzyme catalyses L-aspartate + NAD(+) + H2O = oxaloacetate + NH4(+) + NADH + H(+). Its pathway is cofactor biosynthesis; NAD(+) biosynthesis; iminoaspartate from L-aspartate (dehydrogenase route): step 1/1. Functionally, specifically catalyzes the NAD or NADP-dependent dehydrogenation of L-aspartate to iminoaspartate. This Methanococcus maripaludis (strain C5 / ATCC BAA-1333) protein is L-aspartate dehydrogenase.